We begin with the raw amino-acid sequence, 352 residues long: Heat-inducible transcription repressor HrcA (352 aa).

This sequence belongs to the HrcA family.

Its function is as follows. Negative regulator of class I heat shock genes (grpE-dnaK-dnaJ and groELS operons). Prevents heat-shock induction of these operons. This chain is Heat-inducible transcription repressor HrcA, found in Prochlorococcus marinus (strain MIT 9313).